A 95-amino-acid chain; its full sequence is Mitochondrial import inner membrane translocase subunit Tim9 (95 aa).

The short motif at 35–59 (CFTDCIRDFTTRDVKDSEEKCSLNC) is the Twin CX3C motif element. 2 cysteine pairs are disulfide-bonded: Cys-35/Cys-59 and Cys-39/Cys-55.

This sequence belongs to the small Tim family. Heterohexamer; composed of 3 copies of Tim9 and 3 copies of Tim10, named soluble 70 kDa complex. The complex associates with the Tim22 component of the TIM22 complex. Interacts with multi-pass transmembrane proteins in transit.

It localises to the mitochondrion inner membrane. Mitochondrial intermembrane chaperone that participates in the import and insertion of multi-pass transmembrane proteins into the mitochondrial inner membrane. May also be required for the transfer of beta-barrel precursors from the TOM complex to the sorting and assembly machinery (SAM complex) of the outer membrane. Acts as a chaperone-like protein that protects the hydrophobic precursors from aggregation and guide them through the mitochondrial intermembrane space. The protein is Mitochondrial import inner membrane translocase subunit Tim9 (Tim9a) of Drosophila melanogaster (Fruit fly).